The following is a 273-amino-acid chain: Mitochondrial distribution and morphology protein 12 (273 aa).

Residues 1–260 (MSFDINWEQL…WPSWINFDFY (260 aa)) enclose the SMP-LTD domain. The interval 76-98 (MSAEEETEGSDDEGYGGDRVRNR) is disordered. Over residues 78-90 (AEEETEGSDDEGY) the composition is skewed to acidic residues.

The protein belongs to the MDM12 family. In terms of assembly, component of the ER-mitochondria encounter structure (ERMES) or MDM complex, composed of MMM1, MDM10, MDM12 and MDM34. An MMM1 homodimer associates with one molecule of MDM12 on each side in a pairwise head-to-tail manner, and the SMP-LTD domains of MMM1 and MDM12 generate a continuous hydrophobic tunnel for phospholipid trafficking.

The protein localises to the mitochondrion outer membrane. Its subcellular location is the endoplasmic reticulum membrane. In terms of biological role, component of the ERMES/MDM complex, which serves as a molecular tether to connect the endoplasmic reticulum (ER) and mitochondria. Components of this complex are involved in the control of mitochondrial shape and protein biogenesis, and function in nonvesicular lipid trafficking between the ER and mitochondria. MDM12 is required for the interaction of the ER-resident membrane protein MMM1 and the outer mitochondrial membrane-resident beta-barrel protein MDM10. The MDM12-MMM1 subcomplex functions in the major beta-barrel assembly pathway that is responsible for biogenesis of all mitochondrial outer membrane beta-barrel proteins, and acts in a late step after the SAM complex. The MDM10-MDM12-MMM1 subcomplex further acts in the TOM40-specific pathway after the action of the MDM12-MMM1 complex. Essential for establishing and maintaining the structure of mitochondria and maintenance of mtDNA nucleoids. The protein is Mitochondrial distribution and morphology protein 12 of Vanderwaltozyma polyspora (strain ATCC 22028 / DSM 70294 / BCRC 21397 / CBS 2163 / NBRC 10782 / NRRL Y-8283 / UCD 57-17) (Kluyveromyces polysporus).